The chain runs to 113 residues: ECORI-T site protein ETM (113 aa).

The sequence is that of ECORI-T site protein ETM (ETM) from Autographa californica nuclear polyhedrosis virus (AcMNPV).